We begin with the raw amino-acid sequence, 484 residues long: Dual specificity protein kinase CLK1 (484 aa).

Residues 1-42 are disordered; that stretch reads MRHSKRTYCPDWDDKDWDYGKWRSSSSHKRRKRSHSSAQENK. Over residues 26 to 35 the composition is skewed to basic residues; sequence SSHKRRKRSH. At Ser61 the chain carries Phosphoserine. A disordered region spans residues 79-146; it reads DYTQGCEPGH…RTRSVEDDEE (68 aa). Basic and acidic residues predominate over residues 86-97; it reads PGHRQRDHESRY. The segment covering 100–112 has biased composition (low complexity); the sequence is HSSKSSGRSGRSS. A compositionally biased stretch (basic residues) spans 113–138; that stretch reads YKSKHRIHHSTSHRRSHGKSHRRKRT. Thr138 carries the phosphothreonine modification. Ser140 carries the phosphoserine modification. In terms of domain architecture, Protein kinase spans 161 to 477; sequence YEIVDTLGEG…LREALKHPFF (317 aa). Residues 167–175 and Lys191 each bind ATP; that span reads LGEGAFGKV. Residue Asp288 is the Proton acceptor of the active site.

It belongs to the protein kinase superfamily. CMGC Ser/Thr protein kinase family. Lammer subfamily. In terms of assembly, interacts with PPIG and UBL5. Post-translationally, autophosphorylates on all three types of residues. Endothelial cells.

It is found in the nucleus. The enzyme catalyses L-seryl-[protein] + ATP = O-phospho-L-seryl-[protein] + ADP + H(+). It carries out the reaction L-threonyl-[protein] + ATP = O-phospho-L-threonyl-[protein] + ADP + H(+). It catalyses the reaction L-tyrosyl-[protein] + ATP = O-phospho-L-tyrosyl-[protein] + ADP + H(+). Regulates splicing of its own pre-mRNA according to its kinase activity; increased expression of the catalytically active form influences splicing to generate the catalytically inactive splicing variant lacking the kinase domain. Leucettine L41 inhibits its kinase activity and affects the regulation of alternative splicing mediated by phosphorylation of SR proteins. Its function is as follows. Dual specificity kinase acting on both serine/threonine and tyrosine-containing substrates. Phosphorylates serine- and arginine-rich (SR) proteins of the spliceosomal complex and may be a constituent of a network of regulatory mechanisms that enable SR proteins to control RNA splicing. Phosphorylates: SRSF1, SRSF3 and PTPN1. Regulates the alternative splicing of tissue factor (F3) pre-mRNA in endothelial cells. This is Dual specificity protein kinase CLK1 from Homo sapiens (Human).